The following is a 445-amino-acid chain: 3-phosphoshikimate 1-carboxyvinyltransferase (445 aa).

The tract at residues 1 to 25 (MSHSDQTSPLEARKSAALSGTARVP) is disordered. Residues lysine 28, serine 29, and arginine 33 each coordinate 3-phosphoshikimate. Position 28 (lysine 28) interacts with phosphoenolpyruvate. Phosphoenolpyruvate contacts are provided by glycine 101 and arginine 129. Residues serine 175, glutamine 177, aspartate 328, and lysine 355 each contribute to the 3-phosphoshikimate site. Residue glutamine 177 participates in phosphoenolpyruvate binding. Aspartate 328 serves as the catalytic Proton acceptor. Arginine 359 and arginine 402 together coordinate phosphoenolpyruvate.

It belongs to the EPSP synthase family. As to quaternary structure, monomer.

The protein localises to the cytoplasm. The enzyme catalyses 3-phosphoshikimate + phosphoenolpyruvate = 5-O-(1-carboxyvinyl)-3-phosphoshikimate + phosphate. The protein operates within metabolic intermediate biosynthesis; chorismate biosynthesis; chorismate from D-erythrose 4-phosphate and phosphoenolpyruvate: step 6/7. Functionally, catalyzes the transfer of the enolpyruvyl moiety of phosphoenolpyruvate (PEP) to the 5-hydroxyl of shikimate-3-phosphate (S3P) to produce enolpyruvyl shikimate-3-phosphate and inorganic phosphate. This chain is 3-phosphoshikimate 1-carboxyvinyltransferase, found in Rhodopseudomonas palustris (strain BisB5).